The following is a 377-amino-acid chain: Queuine tRNA-ribosyltransferase (377 aa).

The active-site Proton acceptor is the Asp89. Substrate contacts are provided by residues 89–93 (DSGGF), Asp143, Gln187, and Gly214. The RNA binding stretch occupies residues 245–251 (GVGKPED). Asp264 serves as the catalytic Nucleophile. The RNA binding; important for wobble base 34 recognition stretch occupies residues 269–273 (TRNAR). The Zn(2+) site is built by Cys302, Cys304, Cys307, and His333.

This sequence belongs to the queuine tRNA-ribosyltransferase family. As to quaternary structure, homodimer. Within each dimer, one monomer is responsible for RNA recognition and catalysis, while the other monomer binds to the replacement base PreQ1. It depends on Zn(2+) as a cofactor.

It catalyses the reaction 7-aminomethyl-7-carbaguanine + guanosine(34) in tRNA = 7-aminomethyl-7-carbaguanosine(34) in tRNA + guanine. It participates in tRNA modification; tRNA-queuosine biosynthesis. Functionally, catalyzes the base-exchange of a guanine (G) residue with the queuine precursor 7-aminomethyl-7-deazaguanine (PreQ1) at position 34 (anticodon wobble position) in tRNAs with GU(N) anticodons (tRNA-Asp, -Asn, -His and -Tyr). Catalysis occurs through a double-displacement mechanism. The nucleophile active site attacks the C1' of nucleotide 34 to detach the guanine base from the RNA, forming a covalent enzyme-RNA intermediate. The proton acceptor active site deprotonates the incoming PreQ1, allowing a nucleophilic attack on the C1' of the ribose to form the product. After dissociation, two additional enzymatic reactions on the tRNA convert PreQ1 to queuine (Q), resulting in the hypermodified nucleoside queuosine (7-(((4,5-cis-dihydroxy-2-cyclopenten-1-yl)amino)methyl)-7-deazaguanosine). This Shewanella denitrificans (strain OS217 / ATCC BAA-1090 / DSM 15013) protein is Queuine tRNA-ribosyltransferase.